The following is a 101-amino-acid chain: Small ribosomal subunit protein uS14 (101 aa).

This sequence belongs to the universal ribosomal protein uS14 family. In terms of assembly, part of the 30S ribosomal subunit. Contacts proteins S3 and S10.

Functionally, binds 16S rRNA, required for the assembly of 30S particles and may also be responsible for determining the conformation of the 16S rRNA at the A site. This is Small ribosomal subunit protein uS14 from Marinobacter nauticus (strain ATCC 700491 / DSM 11845 / VT8) (Marinobacter aquaeolei).